Here is a 156-residue protein sequence, read N- to C-terminus: Large ribosomal subunit protein uL15 (156 aa).

The tract at residues 1–48 (MKLHDLKPTPGSRKDRKRVGRGPGGTDKTAGRGHKGQKSRSGAGKGAF) is disordered.

Belongs to the universal ribosomal protein uL15 family. As to quaternary structure, part of the 50S ribosomal subunit. Contacts proteins L4, L21 and L35.

Its function is as follows. Binds to the 23S rRNA. The sequence is that of Large ribosomal subunit protein uL15 (rplO) from Deinococcus radiodurans (strain ATCC 13939 / DSM 20539 / JCM 16871 / CCUG 27074 / LMG 4051 / NBRC 15346 / NCIMB 9279 / VKM B-1422 / R1).